Here is a 496-residue protein sequence, read N- to C-terminus: Probable zinc metalloprotease SNOG_06590 (496 aa).

A signal peptide spans 1 to 20 (MRSSMFFAVCAAAALQTALS). The N-linked (GlcNAc...) asparagine glycan is linked to Asn-138. Residues His-161, Asp-181, and Glu-226 each coordinate Zn(2+). Asn-241 carries an N-linked (GlcNAc...) asparagine glycan. Asp-253 provides a ligand contact to Zn(2+). N-linked (GlcNAc...) asparagine glycans are attached at residues Asn-282, Asn-361, Asn-409, Asn-415, and Asn-457. The Fibronectin type-III domain maps to 402–496 (EPMNVGINTT…PFPFGCTRNC (95 aa)).

The protein belongs to the peptidase M28 family. M28B subfamily. The cofactor is Zn(2+).

Its subcellular location is the secreted. The protein is Probable zinc metalloprotease SNOG_06590 of Phaeosphaeria nodorum (strain SN15 / ATCC MYA-4574 / FGSC 10173) (Glume blotch fungus).